Consider the following 478-residue polypeptide: tRNA modification GTPase MnmE (478 aa).

(6S)-5-formyl-5,6,7,8-tetrahydrofolate contacts are provided by arginine 25, glutamate 82, and lysine 135. Residues 231–400 (GIKVVIAGQP…LREQLLRVVG (170 aa)) enclose the TrmE-type G domain. Residue asparagine 241 coordinates K(+). GTP is bound by residues 241–246 (NVGKSS), 260–266 (TPVAGTT), and 285–288 (DTAG). Serine 245 contributes to the Mg(2+) binding site. Residues threonine 260, valine 262, and threonine 265 each coordinate K(+). Threonine 266 serves as a coordination point for Mg(2+). (6S)-5-formyl-5,6,7,8-tetrahydrofolate is bound at residue lysine 478.

The protein belongs to the TRAFAC class TrmE-Era-EngA-EngB-Septin-like GTPase superfamily. TrmE GTPase family. As to quaternary structure, homodimer. Heterotetramer of two MnmE and two MnmG subunits. It depends on K(+) as a cofactor.

It localises to the cytoplasm. Exhibits a very high intrinsic GTPase hydrolysis rate. Involved in the addition of a carboxymethylaminomethyl (cmnm) group at the wobble position (U34) of certain tRNAs, forming tRNA-cmnm(5)s(2)U34. The polypeptide is tRNA modification GTPase MnmE (Polaromonas naphthalenivorans (strain CJ2)).